The primary structure comprises 289 residues: 4-hydroxy-tetrahydrodipicolinate synthase (289 aa).

Thr43 contacts pyruvate. The Proton donor/acceptor role is filled by Tyr131. The Schiff-base intermediate with substrate role is filled by Lys160. Residue Val200 participates in pyruvate binding.

This sequence belongs to the DapA family. As to quaternary structure, homotetramer; dimer of dimers.

It is found in the cytoplasm. It catalyses the reaction L-aspartate 4-semialdehyde + pyruvate = (2S,4S)-4-hydroxy-2,3,4,5-tetrahydrodipicolinate + H2O + H(+). It functions in the pathway amino-acid biosynthesis; L-lysine biosynthesis via DAP pathway; (S)-tetrahydrodipicolinate from L-aspartate: step 3/4. In terms of biological role, catalyzes the condensation of (S)-aspartate-beta-semialdehyde [(S)-ASA] and pyruvate to 4-hydroxy-tetrahydrodipicolinate (HTPA). This is 4-hydroxy-tetrahydrodipicolinate synthase from Methanococcus maripaludis (strain C7 / ATCC BAA-1331).